A 208-amino-acid polypeptide reads, in one-letter code: uncharacterized protein (208 aa).

This is an uncharacterized protein from Caenorhabditis elegans.